Reading from the N-terminus, the 752-residue chain is Protein GCN20 (752 aa).

An N-acetylalanine modification is found at Ala-2. 2 consecutive ABC transporter domains span residues 199–464 (IHID…RKNA) and 532–748 (IQLQ…AAGV). ATP is bound by residues 232 to 239 (GQNGIGKS) and 565 to 572 (GANGCGKT).

The protein belongs to the ABC transporter superfamily. ABCF family. EF3 subfamily. As to quaternary structure, interacts (via N-terminus) with GCN1 (via C-terminus); this interaction stimulates GCN2 kinase activity in response to amino acid starvation. The GCN1-GCN20 complex interacts with GCN2 on translating ribosomes in amino acid-starved cells; this association stimulates GCN2 kinase activation by uncharged tRNAs, and hence allowing GCN4 translational activation and derepression of amino acid biosynthetic genes. Associates with ribosomes.

In terms of biological role, acts as a positive activator of the GCN2 protein kinase activity in response to in response to low amino acid, carbon, or purine availability. Component of the GCN1-GCN20 complex that forms a complex with GCN2 on translating ribosomes; during this process, GCN20 helps GCN1 to act as a chaperone to facilitate delivery of uncharged tRNAs that enter the A site of ribosomes to the tRNA-binding domain of GCN2, and hence stimulating GCN2 kinase activity. Participates in gene-specific mRNA translation activation, such as the transcriptional activator GCN4, by promoting the GCN2-mediated phosphorylation of eukaryotic translation initiation factor 2 (eIF-2-alpha/SUI2) on 'Ser-52', and hence allowing GCN4-mediated reprogramming of amino acid biosynthetic gene expression to alleviate nutrient depletion. This Saccharomyces cerevisiae (strain ATCC 204508 / S288c) (Baker's yeast) protein is Protein GCN20.